We begin with the raw amino-acid sequence, 153 residues long: Superoxide dismutase [Cu-Zn] (153 aa).

3 residues coordinate Cu cation: His45, His47, and His62. A disulfide bridge connects residues Cys56 and Cys145. 4 residues coordinate Zn(2+): His62, His70, His79, and Asp82. Cu cation is bound at residue His119.

It belongs to the Cu-Zn superoxide dismutase family. In terms of assembly, homodimer. Requires Cu cation as cofactor. Zn(2+) is required as a cofactor.

It is found in the cytoplasm. The enzyme catalyses 2 superoxide + 2 H(+) = H2O2 + O2. Functionally, destroys radicals which are normally produced within the cells and which are toxic to biological systems. This chain is Superoxide dismutase [Cu-Zn], found in Ceratitis capitata (Mediterranean fruit fly).